The sequence spans 283 residues: Glutamate racemase (283 aa).

Substrate-binding positions include 7-8 (DS) and 39-40 (YG). Cysteine 70 serves as the catalytic Proton donor/acceptor. 71–72 (NT) lines the substrate pocket. The active-site Proton donor/acceptor is cysteine 206. Substrate is bound at residue 207 to 208 (TH).

This sequence belongs to the aspartate/glutamate racemases family.

The catalysed reaction is L-glutamate = D-glutamate. Its pathway is cell wall biogenesis; peptidoglycan biosynthesis. Provides the (R)-glutamate required for cell wall biosynthesis. The sequence is that of Glutamate racemase from Phenylobacterium zucineum (strain HLK1).